The sequence spans 318 residues: Thiohydrolase aneE (318 aa).

Belongs to the polyketide transferase af380 family.

The catalysed reaction is aculene D + L-prolyl-[peptidyl-carrier protein] = aculene B + holo-[peptidyl-carrier protein]. It carries out the reaction aculene C + L-prolyl-[peptidyl-carrier protein] = aculene A + holo-[peptidyl-carrier protein]. Its pathway is secondary metabolite biosynthesis. Thiohydrolase; part of the gene cluster that mediates the biosynthesis of aculenes, a unique type of norsesquiterpenes that contain a nordaucane skeleton linked to an L-proline moiety and are of mixed biosynthetic origin. The pathway begins with the synthesis of dauca-4,7-diene by the terpene cyclase aneC using farnesyl pyrophosphate (FPP) as substrate. The cytochrome P450 monooxygenase aneF then performs the initial oxidation at C-12 of dauca-4,7-diene to yield asperaculane D. Asperaculane D is substrate of the cytochrome P450 monooxygenase aneD for C-10 hydroxylation to yield asperaculane E. The cytochrome P450 monooxygenase aneG then converts asperaculane E into aculene D via C-2 oxidation. The monomodular nonribosomal peptide synthtase aneB adenylates L-proline and the thiohydrolase aneE transfers this activated L-proline derivative to aculenes D and C to produce respectively aculenes B and A. The dioxygenase aneA converts aculene D into aculene C, and aculene B into aculene A by introducing the 5,6-alkene moiety. Asperculanes A, B, C and F, as well as 14-prolyl asperculane C, might be shunt products of the pathway. The protein is Thiohydrolase aneE of Aspergillus aculeatus (strain ATCC 16872 / CBS 172.66 / WB 5094).